We begin with the raw amino-acid sequence, 448 residues long: Phosphoglucosamine mutase (448 aa).

Serine 102 acts as the Phosphoserine intermediate in catalysis. Mg(2+) contacts are provided by serine 102, aspartate 242, aspartate 244, and aspartate 246. Position 102 is a phosphoserine (serine 102).

The protein belongs to the phosphohexose mutase family. Mg(2+) serves as cofactor. Activated by phosphorylation.

It catalyses the reaction alpha-D-glucosamine 1-phosphate = D-glucosamine 6-phosphate. Catalyzes the conversion of glucosamine-6-phosphate to glucosamine-1-phosphate. The sequence is that of Phosphoglucosamine mutase from Brevibacillus brevis (strain 47 / JCM 6285 / NBRC 100599).